The chain runs to 682 residues: Heat shock 70 kDa protein 9, mitochondrial (682 aa).

The transit peptide at 1-46 directs the protein to the mitochondrion; the sequence is MASVALLRSFRRREVQMASVSAFKSVSANGKNSMFGKLGYLARPFC. The interval 640-682 is disordered; the sequence is SKIGEHMSKGSGSSGSDGSSGEGTSGTEQTPEAEFEEASGSRK. Over residues 651-663 the composition is skewed to gly residues; sequence GSSGSDGSSGEGT.

It belongs to the heat shock protein 70 (TC 1.A.33) family. DnaK subfamily. In terms of assembly, interacts with HSCB.

It is found in the mitochondrion. Its subcellular location is the cytoplasm. It localises to the cytosol. In terms of biological role, chaperone involved in the maturation of iron-sulfur [Fe-S] cluster-containing proteins. Has a low intrinsic ATPase activity which is markedly stimulated by HSCB and ISU1. In cooperation with other chaperones, Hsp70s are key components that facilitate folding of de novo synthesized proteins, assist translocation of precursor proteins into organelles, and are responsible for degradation of damaged protein under stress conditions. The sequence is that of Heat shock 70 kDa protein 9, mitochondrial from Arabidopsis thaliana (Mouse-ear cress).